The chain runs to 329 residues: Malate dehydrogenase (329 aa).

Glycine 12–glycine 18 lines the NAD(+) pocket. Substrate-binding residues include arginine 95 and arginine 101. Residues asparagine 108, glutamine 115, and valine 132–asparagine 134 contribute to the NAD(+) site. Substrate is bound by residues asparagine 134 and arginine 165. Histidine 190 (proton acceptor) is an active-site residue.

Belongs to the LDH/MDH superfamily. MDH type 2 family.

The catalysed reaction is (S)-malate + NAD(+) = oxaloacetate + NADH + H(+). Its function is as follows. Catalyzes the reversible oxidation of malate to oxaloacetate. This is Malate dehydrogenase from Polynucleobacter asymbioticus (strain DSM 18221 / CIP 109841 / QLW-P1DMWA-1) (Polynucleobacter necessarius subsp. asymbioticus).